Reading from the N-terminus, the 456-residue chain is ATP synthase subunit beta 1 (456 aa).

Residue G152–S159 participates in ATP binding.

This sequence belongs to the ATPase alpha/beta chains family. As to quaternary structure, F-type ATPases have 2 components, CF(1) - the catalytic core - and CF(0) - the membrane proton channel. CF(1) has five subunits: alpha(3), beta(3), gamma(1), delta(1), epsilon(1). CF(0) has three main subunits: a(1), b(2) and c(9-12). The alpha and beta chains form an alternating ring which encloses part of the gamma chain. CF(1) is attached to CF(0) by a central stalk formed by the gamma and epsilon chains, while a peripheral stalk is formed by the delta and b chains.

It is found in the cell membrane. The enzyme catalyses ATP + H2O + 4 H(+)(in) = ADP + phosphate + 5 H(+)(out). Its function is as follows. Produces ATP from ADP in the presence of a proton gradient across the membrane. The catalytic sites are hosted primarily by the beta subunits. The sequence is that of ATP synthase subunit beta 1 from Listeria monocytogenes serotype 4b (strain F2365).